The sequence spans 215 residues: Large ribosomal subunit protein uL4 (215 aa).

The disordered stretch occupies residues 46–76; that stretch reads TAKSKNRAEVSGGGRKPWAQKGGGRARAGSI. Residues 56 to 71 are compositionally biased toward gly residues; sequence SGGGRKPWAQKGGGRA.

The protein belongs to the universal ribosomal protein uL4 family. As to quaternary structure, part of the 50S ribosomal subunit.

In terms of biological role, one of the primary rRNA binding proteins, this protein initially binds near the 5'-end of the 23S rRNA. It is important during the early stages of 50S assembly. It makes multiple contacts with different domains of the 23S rRNA in the assembled 50S subunit and ribosome. Its function is as follows. Forms part of the polypeptide exit tunnel. The chain is Large ribosomal subunit protein uL4 from Helicobacter acinonychis (strain Sheeba).